Consider the following 366-residue polypeptide: cAMP-dependent protein kinase regulatory subunit (366 aa).

The dimerization and phosphorylation stretch occupies residues 1–121 (MSGGNEEDQL…SLESAMRKNL (121 aa)). The tract at residues 55 to 87 (QRAQEGGNPDAADDDDIIVEPPKRSGGRRTGIS) is disordered. Positions 82-86 (RRTGI) match the Pseudophosphorylation motif motif. Ser87 carries the phosphoserine modification. 3',5'-cyclic AMP contacts are provided by residues 122 to 239 (LFAH…SKVQ), Glu187, Arg196, 240 to 366 (ILAD…KLMT), Glu311, and Arg320.

This sequence belongs to the cAMP-dependent kinase regulatory chain family. As to quaternary structure, tetramer, composed of 2 regulatory (R) and 2 catalytic (C) subunits. In the presence of cAMP it dissociates into 2 active monomeric C subunits and an R dimer that binds four cAMP molecules. The pseudophosphorylation site binds to the substrate-binding region of the catalytic chain but is not phosphorylated. The physiological significance of phosphorylations by other kinases is unclear.

The protein resides in the cytoplasm. It is found in the cytosol. Its function is as follows. Controls the rhythmic contraction of enteric muscles probably by regulating G-protein coupled receptor aex-2-mediated calcium influx in GABAergic DVB neurons. The sequence is that of cAMP-dependent protein kinase regulatory subunit (kin-2) from Caenorhabditis elegans.